The following is a 1291-amino-acid chain: METEFVNANHLPHFLRRALPALGPGLLIAIGYVDPGKWAATVEGGARFGFDLVLPMLIFNFVAILCQYLSARIGVVTGKDLAQICSDEYDKWTCMFLGVQAALSVIALDLTMILGIAHGLNLLFGMDLSTCVFLAAVDAVLFPVFATLLERCKASFLSTCIAGFLLLLYFFGVLISQPEIPLPMNGMPIKLSEDSAFALMSLLGASIMPHNFFLHSSMVLQHQGPPNISKGALCLNHFFAILCIFSGIYLVNYVLMNSAANVFYSTGLVLLTFPDAMSLMEPVFRSPVALCVFSLILFFANHITALTWNLGGQVVLQGFLRLDIPNWLQRATIRIIAVVPALYCVWTSGVEGIYQLLIFTQVMVALLLPSSVIPLFRIASSRQVMAAYKISAFLEFLALISFMGMLGIKIIFVVEMVFGDSDWAGNLRWSTSGGSSTSYTVLLITACSSFCLMLWLAATPLKSATHLDAQVWNWDVQNTVSEPSMQIEEEIFSETRYTEEESIGGQEQLSGPGKSAESYSDVTVANADPDLPVTIMESDQEHHLTTIKENHSEITFSSPGTFYEEETSPIIESVSLSAAMNVVPGSELLGAKKIDIESMDSVEKTVDIDGDFHAEKEDDEGDSWEPEESSKGVPGSTSSLTSDGPGSFRSLSGKSDEGGNGAGSLSRLAGLGRAARRQLASVLDEFWGQLYDFHGQTTQEAKTKKLDALGVDLKPSLLKVDTAGKEFSGYFSSVGGRASDSQIHSSLGDSPNHLRVPSNIDSSYGGQRGPSSLWSNHMQLMDAYAQGPSRSIADSSERRYSSVHTLPSSDGRCIQPATVHGYQIASIINQIAKERGSSSLNGQMDSPAPISPSLGPRNYRDPLTVAMGQKLQNGPSSSQPPGFQNLAVSRNSTLQSERHYHDVYSSGSADDAGKSANTKKYHSLPDIAGLAGPYRDLYMSEKNAQWDKSVGFGSSVSRTGYEQSYYSNTRSGAGAGGPLSFNRLPKGHGDAFSFHMTPDPGSLWSRQPFEQFGVADKSRVVGSGLGNRSNSINREVISPVDPEAQLLQSFRRCIVKLLKLEGSDWLFRQNDGADEDLIDRVAARERYLYEAETREMNCVANMGESPYLYSDRKSGSVLRNDDAAITNIMVSSVPNCGEGCVWRVDLIISFGVWCIHRILDLSLMESRPELWGKYTYVLNRLQGIIELAFSKPRSPMSPCFCLQIPASHQHRSSPPVSNGMLPPASKPGRGKCTTAATLLDLIKDVEIAISCRKGRSGTAAGDVAFPKGKENLASVLKRYKRRLSSKGIASK.

Transmembrane regions (helical) follow at residues 18–38, 48–68, 96–116, 128–148, 155–175, and 195–215; these read ALPA…PGKW, FGFD…LCQY, FLGV…ILGI, LSTC…FATL, SFLS…GVLI, and SAFA…FFLH. An N-linked (GlcNAc...) asparagine glycan is attached at Asn227. The next 7 helical transmembrane spans lie at 231 to 251, 253 to 273, 288 to 308, 335 to 355, 356 to 376, 393 to 413, and 441 to 461; these read GALC…IYLV, YVLM…LLTF, VALC…ALTW, IIAV…GIYQ, LLIF…IPLF, FLEF…IIFV, and VLLI…ATPL. Positions 498-518 are disordered; it reads TEEESIGGQEQLSGPGKSAES. An N-linked (GlcNAc...) asparagine glycan is attached at Asn550. The tract at residues 614–662 is disordered; the sequence is AEKEDDEGDSWEPEESSKGVPGSTSSLTSDGPGSFRSLSGKSDEGGNGA. Over residues 617 to 627 the composition is skewed to acidic residues; that stretch reads EDDEGDSWEPE. Over residues 635–653 the composition is skewed to polar residues; sequence GSTSSLTSDGPGSFRSLSG. Ser647 and Ser664 each carry phosphoserine. Disordered stretches follow at residues 742–768 and 787–808; these read QIHS…GGQR and GPSR…TLPS. Positions 759 to 768 are enriched in polar residues; sequence NIDSSYGGQR. The residue at position 818 (Thr818) is a Phosphothreonine. A disordered region spans residues 836 to 856; the sequence is GSSSLNGQMDSPAPISPSLGP. N-linked (GlcNAc...) asparagine glycosylation occurs at Asn891. Ser923 carries the phosphoserine modification. Asn1027 carries N-linked (GlcNAc...) asparagine glycosylation. Residues 1210 to 1229 form a disordered region; it reads HRSSPPVSNGMLPPASKPGR. A Nuclear localization signal motif is present at residues 1262-1269; it reads DVAFPKGK.

The protein belongs to the NRAMP (TC 2.A.55) family.

Its subcellular location is the endoplasmic reticulum membrane. The protein resides in the nucleus. It localises to the cytoplasm. Functionally, central factor in signaling pathways regulated by ethylene (ET) and involved in various processes including development, plant defense, senescence, nucleotide sugar flux, and tropisms. Its function is as follows. Trafficking signal inducing ethylene response. The nuclear localization is both necessary and sufficient to activate EIN3-mediated transcription and ethylene responses. The chain is Ethylene-insensitive protein 2.2 from Populus trichocarpa (Western balsam poplar).